We begin with the raw amino-acid sequence, 306 residues long: Ribonuclease H2 subunit B (306 aa).

Positions 232 to 285 (LPDLSSPTPEPPVKKRRVSDAPVEADEDYTKYNSDNKSRKSNSKMTAAQKSLAK) are disordered. Positions 259-269 (DYTKYNSDNKS) are enriched in basic and acidic residues.

The protein belongs to the RNase H2 subunit B family. The RNase H2 complex is a heterotrimer composed of the catalytic subunit RNASEH2A and the non-catalytic subunits RNASEH2B and RNASEH2C.

It is found in the nucleus. Non catalytic subunit of RNase H2, an endonuclease that specifically degrades the RNA of RNA:DNA hybrids. Participates in DNA replication, possibly by mediating the removal of lagging-strand Okazaki fragment RNA primers during DNA replication. Mediates the excision of single ribonucleotides from DNA:RNA duplexes. The sequence is that of Ribonuclease H2 subunit B (rnaseh2b) from Xenopus laevis (African clawed frog).